A 299-amino-acid chain; its full sequence is UPF0276 protein ABO_1518 (299 aa).

The protein belongs to the UPF0276 family.

The sequence is that of UPF0276 protein ABO_1518 from Alcanivorax borkumensis (strain ATCC 700651 / DSM 11573 / NCIMB 13689 / SK2).